The chain runs to 278 residues: Urease accessory protein UreD (278 aa).

It belongs to the UreD family. As to quaternary structure, ureD, UreF and UreG form a complex that acts as a GTP-hydrolysis-dependent molecular chaperone, activating the urease apoprotein by helping to assemble the nickel containing metallocenter of UreC. The UreE protein probably delivers the nickel.

The protein localises to the cytoplasm. Its function is as follows. Required for maturation of urease via the functional incorporation of the urease nickel metallocenter. This Leptothrix cholodnii (strain ATCC 51168 / LMG 8142 / SP-6) (Leptothrix discophora (strain SP-6)) protein is Urease accessory protein UreD.